A 429-amino-acid chain; its full sequence is DNA polymerase delta small subunit (429 aa).

The protein belongs to the DNA polymerase delta/II small subunit family. In terms of assembly, heterodimer with subunits of 125 kDa and 50 kDa.

It localises to the nucleus. It catalyses the reaction DNA(n) + a 2'-deoxyribonucleoside 5'-triphosphate = DNA(n+1) + diphosphate. Its function is as follows. The function of the small subunit is not yet clear. This is DNA polymerase delta small subunit (POLD2) from Oryza sativa subsp. japonica (Rice).